Consider the following 381-residue polypeptide: Glycerate 2-kinase (381 aa).

The protein belongs to the glycerate kinase type-1 family.

The enzyme catalyses (R)-glycerate + ATP = (2R)-2-phosphoglycerate + ADP + H(+). In terms of biological role, catalyzes the transfer of the phosphate group from adenosine triphosphate (ATP) to (R)-glycerate to form (2R)-2-phosphoglycerate, an enzymatic step in (L)-glucarate/galactarate catabolic pathway. This Escherichia coli (strain K12) protein is Glycerate 2-kinase (garK).